An 867-amino-acid polypeptide reads, in one-letter code: MHHPKETLLIDSSNPSYSHLTEYRFDNLKREESRSTSLFGDRRRVMKILSGFSLIIIVVFIFATSHEQALSTTGDLTSSTQSTTHGGVVFTYPTTRKSPGKGCVLNSQRSTPKNLKQYTGNISDACLAGIKSSNCKTWLMTNAVILKYSDDVVSNCPSILEFVNKTSLSCSGKSQIQYMYPQSDSASSDCNHSYDFNSNALNRAIYNFNYSKTLISTSYANTPGFAMYTFLLKIMNCVNKNGIKLDAGILNIFTDMTYIDLCESDVFMSSFPDTLNKLIEAGYIVKFYFLNQNLQDTQKNVENVLAGCKYMNSRSYCEIVDWSYHSENPNEFEICIPDSQPSGKKEDFNWHVTELLLIIGIPCISLTICCIAFFVCCLKCAKLKMAMMRMNVFSNDTHQNPDEMELKKRWIGMRKKFNKDVENGSCKELNTQKWSHFASANNYMDIQALANANKKDIWEIDTKNLLVQEDHLLGNGAFANVYKGIVKGKIPLLVVNNSLNMTVESENNGHYEAAIKKLPAHADEQNHLDFFHEIDFMKRLGHHPHVISMLGCVSNPYEPLIVVEYCARGDLLKFLRRHKDYVLMNKTDDCPIEADMCLRIKDLVSIAWQVADGMSYLASKNFIHRDLAARNILLTKSLTAKVSDFGLCRYMDSALYTAKGGRLPIKWMSVEALKLYEFSTKTDVWSFGVLLFEIFSMGDVPYPTIQQVDMLEHLLAGGRLSQPLKCPNEIFNIMQKCWAEKPEDRPEFNEMRGEITVMLNLDDESYGYLSVESQGGPKYTQLTMQDSKETAPCSTPGGSQDMDEDGDYDSGSEGHSQGTCAQLDQVLTERFGEEQKKEIKQIFCEITSKSMRGKRRQSNSTVSTYQS.

The next 2 helical transmembrane spans lie at 45–65 (VMKI…FATS) and 355–375 (LLLI…AFFV). N-linked (GlcNAc...) asparagine glycosylation is found at Asn-395 and Asn-423. Positions 467–757 (VQEDHLLGNG…FNEMRGEITV (291 aa)) constitute a Protein kinase domain. Position 473–481 (473–481 (LGNGAFANV)) interacts with ATP. Asn-496 and Asn-500 each carry an N-linked (GlcNAc...) asparagine glycan. Position 516 (Lys-516) interacts with ATP. N-linked (GlcNAc...) asparagine glycosylation occurs at Asn-585. The active-site Proton acceptor is the Asp-626. Disordered regions lie at residues 782–821 (LTMQ…GTCA) and 848–867 (SKSM…TYQS). The span at 801–810 (DMDEDGDYDS) shows a compositional bias: acidic residues. The span at 858–867 (SNSTVSTYQS) shows a compositional bias: polar residues. An N-linked (GlcNAc...) asparagine glycan is attached at Asn-859.

Belongs to the protein kinase superfamily. Tyr protein kinase family.

It is found in the membrane. The enzyme catalyses L-tyrosyl-[protein] + ATP = O-phospho-L-tyrosyl-[protein] + ADP + H(+). The chain is Putative tyrosine-protein kinase F09A5.2 from Caenorhabditis elegans.